The chain runs to 419 residues: Creatine kinase S-type, mitochondrial (419 aa).

The N-terminal 39 residues, 1–39 (MASAFSKLLTGRNASLLFTTLGTSALTTGYLLNRQKVSA), are a transit peptide targeting the mitochondrion. A cardiolipin-binding region spans residues 40-64 (DAREQHKLFPPSADYPDLRKHNNCM). Positions 46–132 (KLFPPSADYP…FDPVIKLRHN (87 aa)) constitute a Phosphagen kinase N-terminal domain. Positions 159-401 (YVLSSRVRTG…NYLVDCEKKL (243 aa)) constitute a Phosphagen kinase C-terminal domain. ATP contacts are provided by residues 162–166 (SSRVR) and His-225. Residue Tyr-255 is modified to Phosphotyrosine. Residues Arg-270, Arg-326, 354–359 (RGTGGV), and Asp-369 contribute to the ATP site. Thr-356 carries the phosphothreonine modification.

The protein belongs to the ATP:guanido phosphotransferase family. Exists as an octamer composed of four CKMT2 homodimers. In terms of tissue distribution, sarcomere-specific. Found only in heart and skeletal muscles.

It is found in the mitochondrion inner membrane. The enzyme catalyses creatine + ATP = N-phosphocreatine + ADP + H(+). Reversibly catalyzes the transfer of phosphate between ATP and various phosphogens (e.g. creatine phosphate). Creatine kinase isoenzymes play a central role in energy transduction in tissues with large, fluctuating energy demands, such as skeletal muscle, heart, brain and spermatozoa. The sequence is that of Creatine kinase S-type, mitochondrial (Ckmt2) from Rattus norvegicus (Rat).